The chain runs to 513 residues: ATP synthase subunit alpha (513 aa).

169-176 (GDRQTGKT) is an ATP binding site.

Belongs to the ATPase alpha/beta chains family. F-type ATPases have 2 components, CF(1) - the catalytic core - and CF(0) - the membrane proton channel. CF(1) has five subunits: alpha(3), beta(3), gamma(1), delta(1), epsilon(1). CF(0) has three main subunits: a(1), b(2) and c(9-12). The alpha and beta chains form an alternating ring which encloses part of the gamma chain. CF(1) is attached to CF(0) by a central stalk formed by the gamma and epsilon chains, while a peripheral stalk is formed by the delta and b chains.

Its subcellular location is the cell inner membrane. The enzyme catalyses ATP + H2O + 4 H(+)(in) = ADP + phosphate + 5 H(+)(out). Its function is as follows. Produces ATP from ADP in the presence of a proton gradient across the membrane. The alpha chain is a regulatory subunit. In Escherichia coli O81 (strain ED1a), this protein is ATP synthase subunit alpha.